A 31-amino-acid chain; its full sequence is U14-ctenitoxin-Co1c (31 aa).

Expressed by the venom gland.

Its subcellular location is the secreted. Its function is as follows. Not toxic to mice by intracerebroventricular injection. This is U14-ctenitoxin-Co1c from Ctenus ornatus (Brazilian spider).